Reading from the N-terminus, the 552-residue chain is Chaperonin GroEL 1 (552 aa).

Residues 30–33 (TLGP), Lys-51, 87–91 (DGTTT), Gly-415, 479–481 (NAA), and Asp-495 each bind ATP.

This sequence belongs to the chaperonin (HSP60) family. In terms of assembly, forms a cylinder of 14 subunits composed of two heptameric rings stacked back-to-back. Interacts with the co-chaperonin GroES.

It localises to the cytoplasm. It catalyses the reaction ATP + H2O + a folded polypeptide = ADP + phosphate + an unfolded polypeptide.. Its function is as follows. Together with its co-chaperonin GroES, plays an essential role in assisting protein folding. The GroEL-GroES system forms a nano-cage that allows encapsulation of the non-native substrate proteins and provides a physical environment optimized to promote and accelerate protein folding. This is Chaperonin GroEL 1 from Albidiferax ferrireducens (strain ATCC BAA-621 / DSM 15236 / T118) (Rhodoferax ferrireducens).